A 101-amino-acid polypeptide reads, in one-letter code: Gamma-secretase subunit PEN-2 (101 aa).

The Cytoplasmic portion of the chain corresponds to 1-17 (MNLERVSNEEKLNLCRK). An intramembrane region (helical) is located at residues 18–36 (YYLGGFAFLPFLWLVNIFW). At 37 to 57 (FFREAFLAPAYTEQSQIKGYV) the chain is on the cytoplasmic side. Residues 58–78 (WRSAVGFLFWVIILATWITIF) form a helical membrane-spanning segment. The Lumenal portion of the chain corresponds to 79–101 (QIYRPRWGALGDYLSFTIPLGTP).

Belongs to the PEN-2 family. The functional gamma-secretase complex is composed of at least four polypeptides: a presenilin homodimer (PSEN1 or PSEN2), nicastrin (NCSTN), APH1 (APH1A or APH1B) and PSENEN.

The protein localises to the endoplasmic reticulum membrane. The protein resides in the golgi apparatus. It is found in the golgi stack membrane. It localises to the cell membrane. Its subcellular location is the membrane. Essential subunit of the gamma-secretase complex, an endoprotease complex that catalyzes the intramembrane cleavage of integral membrane proteins such as Notch receptors and APP (amyloid-beta precursor protein). The gamma-secretase complex plays a role in Notch and Wnt signaling cascades and regulation of downstream processes via its role in processing key regulatory proteins, and by regulating cytosolic CTNNB1 levels. PSENEN modulates both endoproteolysis of presenilin and gamma-secretase activity. This chain is Gamma-secretase subunit PEN-2 (Psenen), found in Mus musculus (Mouse).